Here is a 1938-residue protein sequence, read N- to C-terminus: Myosin-1 (1938 aa).

One can recognise a Myosin N-terminal SH3-like domain in the interval 33–82; it reads DAKTSVFVADPKESFVKATVQSREGGKVTAKTEAGATVTVKEDQCFPMNP. Residues T64 and T69 each carry the phosphothreonine modification. The Myosin motor domain occupies 86–781; sequence DKIEDMAMMT…LLGLLEEMRD (696 aa). Residue K130 is modified to N6,N6,N6-trimethyllysine. 179–186 lines the ATP pocket; it reads GESGAGKT. Y389 is subject to Phosphotyrosine. A Phosphothreonine modification is found at T419. At Y424 the chain carries Phosphotyrosine. Position 625 is a phosphoserine (S625). The interval 658 to 680 is actin-binding; sequence LNKLMTNLRSTHPHFVRCIIPNE. Position 756 is a pros-methylhistidine (H756). Positions 760 to 774 are actin-binding; it reads KFGHTKVFFKAGLLG. An IQ domain is found at 784-813; the sequence is LAQIITRTQARCRGFLARVEYQRMVERRES. Positions 842–1938 form a coiled coil; that stretch reads LLKSAETEKE…EVHTKIISEE (1097 aa). S1091 and S1095 each carry phosphoserine. 2 disordered regions span residues 1124–1146 and 1152–1171; these read EIEAERASRAKAEKQRSDLSREL and RLEEAGGATSAQIEMNKKRE. The span at 1127 to 1146 shows a compositional bias: basic and acidic residues; that stretch reads AERASRAKAEKQRSDLSREL. 2 positions are modified to phosphoserine: S1161 and S1236. T1240 is subject to Phosphothreonine. S1242 carries the post-translational modification Phosphoserine. Position 1254 is a phosphothreonine (T1254). A Phosphoserine modification is found at S1260. At T1285 the chain carries Phosphothreonine. Residues S1291, S1302, and S1305 each carry the phosphoserine modification. At Y1463 the chain carries Phosphotyrosine. T1466 carries the phosphothreonine modification. S1473 bears the Phosphoserine mark. Position 1491 is a phosphotyrosine (Y1491). S1494 is subject to Phosphoserine. At T1500 the chain carries Phosphothreonine. S1513 is subject to Phosphoserine. Position 1516 is a phosphothreonine (T1516). S1541, S1553, S1573, S1713, and S1725 each carry phosphoserine. Phosphothreonine is present on residues T1729 and T1735. Phosphoserine is present on S1738.

This sequence belongs to the TRAFAC class myosin-kinesin ATPase superfamily. Myosin family. Muscle myosin is a hexameric protein that consists of 2 heavy chain subunits (MHC), 2 alkali light chain subunits (MLC) and 2 regulatory light chain subunits (MLC-2). Interacts with SLC26A5.

The protein resides in the cytoplasm. Its subcellular location is the myofibril. Its function is as follows. Required for normal hearing. It plays a role in cochlear amplification of auditory stimuli, likely through the positive regulation of prestin (SLC26A5) activity and outer hair cell (OHC) electromotility. The sequence is that of Myosin-1 (MYH1) from Equus caballus (Horse).